We begin with the raw amino-acid sequence, 462 residues long: Kinetochore protein Nuf2-A (462 aa).

Coiled-coil stretches lie at residues 143 to 277 and 308 to 461; these read SSYK…DKCD and EIHR…RLSR. The interval 239 to 259 is disordered; it reads RMKSQIVESPEQRKSKTERMK. The segment covering 248 to 259 has biased composition (basic and acidic residues); sequence PEQRKSKTERMK.

Belongs to the NUF2 family. As to quaternary structure, component of the NDC80 complex, which is composed of ndc80, cdca1, spbc24 and spbc25. The NDC80 complex interacts with mis12 and zwint.

The protein localises to the nucleus. It is found in the chromosome. The protein resides in the centromere. Its subcellular location is the kinetochore. In terms of biological role, acts as a component of the essential kinetochore-associated NDC80 complex, which is required for chromosome segregation and spindle checkpoint activity. Required for kinetochore integrity and the organization of stable microtubule binding sites in the outer plate of the kinetochore. The NDC80 complex synergistically enhances the affinity of the SKA1 complex for microtubules and may allow the NDC80 complex to track depolymerizing microtubules. This Xenopus laevis (African clawed frog) protein is Kinetochore protein Nuf2-A (nuf2-a).